Here is a 58-residue protein sequence, read N- to C-terminus: Small ribosomal subunit protein bS21 (58 aa).

This sequence belongs to the bacterial ribosomal protein bS21 family.

In Latilactobacillus sakei subsp. sakei (strain 23K) (Lactobacillus sakei subsp. sakei), this protein is Small ribosomal subunit protein bS21.